Reading from the N-terminus, the 222-residue chain is Fibrillarin-like rRNA/tRNA 2'-O-methyltransferase (222 aa).

S-adenosyl-L-methionine-binding positions include 86 to 87 (TT), 104 to 105 (EV), 129 to 130 (DA), and 149 to 152 (DISQ).

Belongs to the methyltransferase superfamily. Fibrillarin family. As to quaternary structure, interacts with nop5. Component of box C/D small ribonucleoprotein (sRNP) particles that contain rpl7ae, FlpA and nop5, plus a guide RNA.

In terms of biological role, involved in pre-rRNA and tRNA processing. Utilizes the methyl donor S-adenosyl-L-methionine to catalyze the site-specific 2'-hydroxyl methylation of ribose moieties in rRNA and tRNA. Site specificity is provided by a guide RNA that base pairs with the substrate. Methylation occurs at a characteristic distance from the sequence involved in base pairing with the guide RNA. The sequence is that of Fibrillarin-like rRNA/tRNA 2'-O-methyltransferase from Thermoplasma volcanium (strain ATCC 51530 / DSM 4299 / JCM 9571 / NBRC 15438 / GSS1).